Here is a 426-residue protein sequence, read N- to C-terminus: Gamma-glutamyl phosphate reductase (426 aa).

Belongs to the gamma-glutamyl phosphate reductase family.

The protein resides in the cytoplasm. The enzyme catalyses L-glutamate 5-semialdehyde + phosphate + NADP(+) = L-glutamyl 5-phosphate + NADPH + H(+). It participates in amino-acid biosynthesis; L-proline biosynthesis; L-glutamate 5-semialdehyde from L-glutamate: step 2/2. Functionally, catalyzes the NADPH-dependent reduction of L-glutamate 5-phosphate into L-glutamate 5-semialdehyde and phosphate. The product spontaneously undergoes cyclization to form 1-pyrroline-5-carboxylate. This is Gamma-glutamyl phosphate reductase from Ralstonia pickettii (strain 12J).